Consider the following 209-residue polypeptide: Kynurenine formamidase (209 aa).

W18 contributes to the substrate binding site. The Zn(2+) site is built by H48, H52, and D54. Residue H58 is the Proton donor/acceptor of the active site. Residues H160 and E172 each contribute to the Zn(2+) site.

This sequence belongs to the Cyclase 1 superfamily. KynB family. Homodimer. It depends on Zn(2+) as a cofactor.

The catalysed reaction is N-formyl-L-kynurenine + H2O = L-kynurenine + formate + H(+). Its pathway is amino-acid degradation; L-tryptophan degradation via kynurenine pathway; L-kynurenine from L-tryptophan: step 2/2. Its function is as follows. Catalyzes the hydrolysis of N-formyl-L-kynurenine to L-kynurenine, the second step in the kynurenine pathway of tryptophan degradation. The sequence is that of Kynurenine formamidase from Sphingopyxis alaskensis (strain DSM 13593 / LMG 18877 / RB2256) (Sphingomonas alaskensis).